The chain runs to 311 residues: Ribonuclease HIII (311 aa).

Residues 95–311 (MSIVGSDEVG…NTEKAFRLLK (217 aa)) form the RNase H type-2 domain. A divalent metal cation-binding residues include aspartate 101, glutamate 102, and aspartate 206.

The protein belongs to the RNase HII family. RnhC subfamily. Requires Mn(2+) as cofactor. It depends on Mg(2+) as a cofactor.

The protein resides in the cytoplasm. It carries out the reaction Endonucleolytic cleavage to 5'-phosphomonoester.. Its function is as follows. Endonuclease that specifically degrades the RNA of RNA-DNA hybrids. The sequence is that of Ribonuclease HIII from Bacillus cereus (strain ZK / E33L).